A 152-amino-acid polypeptide reads, in one-letter code: Lipoprotein signal peptidase (152 aa).

3 helical membrane passes run 5–25 (LFVL…FWIV), 61–81 (WFFV…LATH), and 84–104 (LNIW…GNFI). Catalysis depends on residues aspartate 114 and aspartate 130. Residues 125 to 145 (IFNVADSYLTVGVILLVICLW) form a helical membrane-spanning segment.

It belongs to the peptidase A8 family.

The protein resides in the cell membrane. It catalyses the reaction Release of signal peptides from bacterial membrane prolipoproteins. Hydrolyzes -Xaa-Yaa-Zaa-|-(S,diacylglyceryl)Cys-, in which Xaa is hydrophobic (preferably Leu), and Yaa (Ala or Ser) and Zaa (Gly or Ala) have small, neutral side chains.. It functions in the pathway protein modification; lipoprotein biosynthesis (signal peptide cleavage). This protein specifically catalyzes the removal of signal peptides from prolipoproteins. This Streptococcus pyogenes serotype M18 (strain MGAS8232) protein is Lipoprotein signal peptidase.